We begin with the raw amino-acid sequence, 292 residues long: Pyruvate formate-lyase 2-activating enzyme (292 aa).

The Radical SAM core domain occupies 33–287 (NDGEGIRTVV…REMAERAGLQ (255 aa)). Positions 47, 51, and 54 each coordinate [4Fe-4S] cluster. Residue 53–55 (WCA) coordinates S-adenosyl-L-methionine. The 4Fe-4S ferredoxin-type domain maps to 62–96 (GKIQTVRREAKCLHCAKCLRDADECPSGAFERIGR). S-adenosyl-L-methionine is bound by residues G126, 175–177 (DLK), and H247.

This sequence belongs to the organic radical-activating enzymes family. [4Fe-4S] cluster is required as a cofactor.

It is found in the cytoplasm. The enzyme catalyses glycyl-[formate C-acetyltransferase] + reduced [flavodoxin] + S-adenosyl-L-methionine = glycin-2-yl radical-[formate C-acetyltransferase] + semiquinone [flavodoxin] + 5'-deoxyadenosine + L-methionine + H(+). In terms of biological role, activation of pyruvate formate-lyase 2 under anaerobic conditions by generation of an organic free radical, using S-adenosylmethionine and reduced flavodoxin as cosubstrates to produce 5'-deoxy-adenosine. The chain is Pyruvate formate-lyase 2-activating enzyme (pflC) from Escherichia coli (strain K12).